The sequence spans 607 residues: Homologous recombination OB-fold protein (607 aa).

4 disordered regions span residues 25-49 (LRPN…SYPA), 84-108 (ISSS…SGRQ), 196-308 (PWPS…TTVT), and 531-581 (LKPP…DDLD). 2 stretches are compositionally biased toward polar residues: residues 27 to 49 (PNSS…SYPA) and 92 to 108 (QQRM…SGRQ). The residue at position 30 (Ser30) is a Phosphoserine. Position 281 is an asymmetric dimethylarginine (Arg281). Positions 295-308 (SPFSTPRSTSTTVT) are enriched in low complexity. Residues 570-581 (PEEELPEADDLD) show a composition bias toward acidic residues.

In terms of assembly, interacts with MCM8; this interaction is necessary for MCM8-MCM9 helicase complex recruitment to DNA damage sites. Interacts with RPA1; this interaction associates HROB with the RPA complex.

The protein localises to the nucleus. It localises to the chromosome. Functionally, DNA-binding protein involved in homologous recombination that acts by recruiting the MCM8-MCM9 helicase complex to sites of DNA damage to promote DNA repair synthesis. This Rattus norvegicus (Rat) protein is Homologous recombination OB-fold protein.